The chain runs to 195 residues: Nicotinamide riboside kinase 2 (195 aa).

9 to 17 contributes to the ATP binding site; sequence GVTNGGKTT. T16 and D35 together coordinate Mg(2+). The Proton acceptor role is filled by D35. Substrate-binding positions include 35–38 and 54–55; these read DDFF and WD. Residue R130 participates in ATP binding. Substrate is bound by residues R131 and 136 to 137; that span reads YM. ATP contacts are provided by residues 134 to 136 and 174 to 176; these read RTY and KSP.

This sequence belongs to the uridine kinase family. NRK subfamily. As to quaternary structure, monomer. Interacts with ITGB1 alone or when associated with alpha-7, but not with alpha-5. In terms of tissue distribution, expressed in skeletal muscle (at protein level).

The catalysed reaction is beta-nicotinamide D-riboside + ATP = beta-nicotinamide D-ribonucleotide + ADP + H(+). The enzyme catalyses beta-D-ribosylnicotinate + ATP = nicotinate beta-D-ribonucleotide + ADP + H(+). It participates in cofactor biosynthesis; NAD(+) biosynthesis. Functionally, catalyzes the phosphorylation of nicotinamide riboside (NR) and nicotinic acid riboside (NaR) to form nicotinamide mononucleotide (NMN) and nicotinic acid mononucleotide (NaMN). Reduces laminin matrix deposition and cell adhesion to laminin, but not to fibronectin. Involved in the regulation of PXN at the protein level and of PXN tyrosine phosphorylation. May play a role in the regulation of terminal myogenesis. The sequence is that of Nicotinamide riboside kinase 2 (Nmrk2) from Mus musculus (Mouse).